We begin with the raw amino-acid sequence, 445 residues long: C-terminal-binding protein 2 (445 aa).

The residue at position 22 (R22) is an Asymmetric dimethylarginine. NAD(+) contacts are provided by residues S106, I186–T191, D210, C243–N249, A270–R272, and D296. Residue R272 is part of the active site. E301 is a catalytic residue. H321 serves as the catalytic Proton donor. H321–W324 is an NAD(+) binding site. The interval T414–Q445 is disordered. At S428 the chain carries Phosphoserine; by HIPK2. The span at K434–Q445 shows a compositional bias: basic and acidic residues.

This sequence belongs to the D-isomer specific 2-hydroxyacid dehydrogenase family. In terms of assembly, interacts with HIPK2 and PNN. Interacts with the transcription factors ZNF217, BKLF, delta EF1/AREB6/ZEB, EVI-1 and Friend of GATA (FOG) via the consensus motif P-X-[DNS]-L-[STVA]. Also interacts with the C-terminus of adenovirus E1A protein. Can form a complex with BKLF on a CACCC-box oligonucleotide. Can form homodimers or heterodimers of CTBP1 and CTBP2. Interacts with NRIP1 and WIZ. Interacts with PRDM16; represses white adipose tissue (WAT)-specific genes expression. Interacts with MCRIP1. In terms of processing, phosphorylation by HIPK2 on Ser-428 induces proteasomal degradation. As to expression, found in all tissues except spleen and liver.

The protein localises to the nucleus. The protein resides in the synapse. Its function is as follows. Corepressor targeting diverse transcription regulators. Isoform 2 probably acts as a scaffold for specialized synapses. Functions in brown adipose tissue (BAT) differentiation. This is C-terminal-binding protein 2 (Ctbp2) from Mus musculus (Mouse).